We begin with the raw amino-acid sequence, 500 residues long: Probable cytosol aminopeptidase (500 aa).

Residues Lys-262 and Asp-267 each coordinate Mn(2+). Residue Lys-274 is part of the active site. Mn(2+) contacts are provided by Asp-285, Asp-344, and Glu-346. The active site involves Arg-348.

The protein belongs to the peptidase M17 family. It depends on Mn(2+) as a cofactor.

It is found in the cytoplasm. The catalysed reaction is Release of an N-terminal amino acid, Xaa-|-Yaa-, in which Xaa is preferably Leu, but may be other amino acids including Pro although not Arg or Lys, and Yaa may be Pro. Amino acid amides and methyl esters are also readily hydrolyzed, but rates on arylamides are exceedingly low.. It catalyses the reaction Release of an N-terminal amino acid, preferentially leucine, but not glutamic or aspartic acids.. Its function is as follows. Presumably involved in the processing and regular turnover of intracellular proteins. Catalyzes the removal of unsubstituted N-terminal amino acids from various peptides. The protein is Probable cytosol aminopeptidase of Ehrlichia ruminantium (strain Gardel).